Consider the following 271-residue polypeptide: Uridine-cytidine kinase 1-A (271 aa).

24 to 32 (GGTASGKST) is a binding site for ATP. Residues D81, Y109, H114, R163, R172, and Q180 each contribute to the substrate site. D209 is a binding site for ATP. The interval 241-271 (SQKRTFPGQGESGGLILPGKRTHLESSSRPH) is disordered. The segment covering 262-271 (THLESSSRPH) has biased composition (basic and acidic residues).

It belongs to the uridine kinase family.

The enzyme catalyses uridine + ATP = UMP + ADP + H(+). The catalysed reaction is cytidine + ATP = CMP + ADP + H(+). The protein operates within pyrimidine metabolism; CTP biosynthesis via salvage pathway; CTP from cytidine: step 1/3. It functions in the pathway pyrimidine metabolism; UMP biosynthesis via salvage pathway; UMP from uridine: step 1/1. Phosphorylates uridine and cytidine to uridine monophosphate and cytidine monophosphate. Does not phosphorylate deoxyribonucleosides or purine ribonucleosides. Can use ATP or GTP as a phosphate donor. This chain is Uridine-cytidine kinase 1-A (uck1-a), found in Xenopus laevis (African clawed frog).